We begin with the raw amino-acid sequence, 202 residues long: Glycerol-3-phosphate acyltransferase (202 aa).

Transmembrane regions (helical) follow at residues 2–22, 54–74, 88–108, 120–140, 141–161, and 162–182; these read MIVI…GYVI, FLVT…PLWL, NGLI…YLGF, VILG…FGIL, YLTK…VIGA, and LLIR…LLII.

This sequence belongs to the PlsY family. In terms of assembly, probably interacts with PlsX.

The protein resides in the cell membrane. The catalysed reaction is an acyl phosphate + sn-glycerol 3-phosphate = a 1-acyl-sn-glycero-3-phosphate + phosphate. The protein operates within lipid metabolism; phospholipid metabolism. Catalyzes the transfer of an acyl group from acyl-phosphate (acyl-PO(4)) to glycerol-3-phosphate (G3P) to form lysophosphatidic acid (LPA). This enzyme utilizes acyl-phosphate as fatty acyl donor, but not acyl-CoA or acyl-ACP. The protein is Glycerol-3-phosphate acyltransferase of Staphylococcus saprophyticus subsp. saprophyticus (strain ATCC 15305 / DSM 20229 / NCIMB 8711 / NCTC 7292 / S-41).